The following is a 692-amino-acid chain: ABC transporter F family member 5 (692 aa).

The tract at residues glutamate 64–serine 95 is disordered. Over residues serine 86–serine 95 the composition is skewed to polar residues. 2 consecutive ABC transporter domains span residues valine 98–asparagine 356 and valine 425–leucine 640. Residues glycine 130–threonine 137 and glycine 457–serine 464 each bind ATP. The disordered stretch occupies residues alanine 644–asparagine 692. Residues glutamine 680–asparagine 692 are compositionally biased toward basic residues.

Belongs to the ABC transporter superfamily. ABCF family. EF3 (TC 3.A.1.121) subfamily.

This is ABC transporter F family member 5 (ABCF5) from Arabidopsis thaliana (Mouse-ear cress).